The chain runs to 95 residues: Small ribosomal subunit protein uS15 (95 aa).

Belongs to the universal ribosomal protein uS15 family. As to quaternary structure, part of the 30S ribosomal subunit. Forms a bridge to the 50S subunit in the 70S ribosome, contacting the 23S rRNA.

In terms of biological role, one of the primary rRNA binding proteins, it binds directly to 16S rRNA where it helps nucleate assembly of the platform of the 30S subunit by binding and bridging several RNA helices of the 16S rRNA. Functionally, forms an intersubunit bridge (bridge B4) with the 23S rRNA of the 50S subunit in the ribosome. The sequence is that of Small ribosomal subunit protein uS15 from Streptomyces coelicolor (strain ATCC BAA-471 / A3(2) / M145).